A 506-amino-acid polypeptide reads, in one-letter code: ATP synthase subunit alpha (506 aa).

170-177 (GDRQTGKT) is an ATP binding site.

The protein belongs to the ATPase alpha/beta chains family. As to quaternary structure, F-type ATPases have 2 components, CF(1) - the catalytic core - and CF(0) - the membrane proton channel. CF(1) has five subunits: alpha(3), beta(3), gamma(1), delta(1), epsilon(1). CF(0) has four main subunits: a(1), b(1), b'(1) and c(9-12).

Its subcellular location is the cellular thylakoid membrane. It carries out the reaction ATP + H2O + 4 H(+)(in) = ADP + phosphate + 5 H(+)(out). Produces ATP from ADP in the presence of a proton gradient across the membrane. The alpha chain is a regulatory subunit. This chain is ATP synthase subunit alpha, found in Parasynechococcus marenigrum (strain WH8102).